The following is a 178-amino-acid chain: Cyclin-dependent kinase inhibitor 1B (178 aa).

Residues M1 to P11 are compositionally biased toward polar residues. The segment at M1–N31 is disordered. S10 bears the Phosphoserine; by UHMK1 mark. The tract at residues D51–P91 is interaction with CDK2. Y74 is subject to Phosphotyrosine; by SRC. The segment at F87–S178 is disordered. The residue at position 88 (Y88) is a Phosphotyrosine; by ABL, LYN, SRC and JAK2. Phosphotyrosine is present on Y89. Residues Q104–R113 show a composition bias toward polar residues. Residues E126–T137 are compositionally biased toward basic and acidic residues. Positions K153–R169 match the Nuclear localization signal motif. T157 carries the post-translational modification Phosphothreonine; by CaMK1, PKB/AKT1, RPS6KA1, RPS6KA3 and PIM1. At T170 the chain carries Phosphothreonine.

It belongs to the CDI family. In terms of assembly, forms a ternary complex composed of CCNE1, CDK2 and CDKN1B. Interacts directly with CCNE1; the interaction is inhibited by CDK2-dependent phosphorylation. Interacts with COPS5, subunit of the COP9 signalosome complex; the interaction leads to CDKN1B degradation. Interacts with NUP50; the interaction leads to nuclear import and degradation of phosphorylated CDKN1B. Interacts with CCND1 and SNX6. Interacts (Thr-198-phosphorylated form) with 14-3-3 proteins, binds strongly YWHAQ, weakly YWHAE and YWHAH, but not YWHAB nor YWHAZ; the interaction with YWHAQ results in translocation to the cytoplasm. Interacts with AKT1 and LYN; the interactions lead to cytoplasmic mislocation, phosphorylation of CDKN1B and inhibition of cell cycle arrest. Forms a ternary complex with CCNA2 and CDK2; CDKN1B inhibits the kinase activity of CDK2 through conformational rearrangements. Interacts (unphosphorylated form) with CDK2. Forms a complex with CDK2 and SPDYA, but does not directly interact with SPDYA. Forms a ternary complex composed of cyclin D, CDK4 and CDKN1B. Interacts (phosphorylated on Tyr-88 and Tyr-89) with CDK4; the interaction is required for cyclin D and CDK4 complex assembly, induces nuclear translocation and activates the CDK4 kinase activity. Interacts with GRB2. Interacts with PIM1. Identified in a complex with SKP1, SKP2 and CKS1B. Interacts with UHMK1; the interaction leads to cytoplasmic mislocation, phosphorylation of CDKN1B and inhibition of cell cycle arrest. Also interacts with CDK1. Dephosphorylated by PPM1H, leading to CDKN1B stability. In terms of processing, phosphorylated; phosphorylation occurs on serine, threonine and tyrosine residues. Phosphorylation on Ser-10 is the major site of phosphorylation in resting cells, takes place at the G(0)-G(1) phase and leads to protein stability. Phosphorylation on other sites is greatly enhanced by mitogens, growth factors, MYC and in certain cancer cell lines. The phosphorylated form found in the cytoplasm is inactivate. Phosphorylation on Tyr-88 has no effect on binding CDK complexes. Post-translationally, ubiquitinated; in the cytoplasm by the KPC complex (composed of RNF123/KPC1 and UBAC1/KPC2) and, in the nucleus, by SCF(SKP2). The latter requires prior phosphorylation on Thr-187. Ubiquitinated; by a TRIM21-containing SCF(SKP2)-like complex; leads to its degradation. Subject to degradation in the lysosome. Interaction with SNX6 promotes lysosomal degradation.

It localises to the nucleus. The protein resides in the cytoplasm. It is found in the endosome. Its function is as follows. Important regulator of cell cycle progression. Inhibits the kinase activity of CDK2 bound to cyclin A, but has little inhibitory activity on CDK2 bound to SPDYA. Involved in G1 arrest. Potent inhibitor of cyclin E- and cyclin A-CDK2 complexes. Forms a complex with cyclin type D-CDK4 complexes and is involved in the assembly, stability, and modulation of CCND1-CDK4 complex activation. Acts either as an inhibitor or an activator of cyclin type D-CDK4 complexes depending on its phosphorylation state and/or stoichometry. This is Cyclin-dependent kinase inhibitor 1B (CDKN1B) from Neovison vison (American mink).